A 340-amino-acid chain; its full sequence is MTEQQPIAVLGGGSFGTAIANLLAENGQAVRQWMRDPEQAEAIRTRRENPRYLKGVKVHPGVDPVTDLERTLADCQLIFVALPSSALRKVLQPHQAALTDKLLVSLTKGIEAHTFKLMSEILEEIAPQARIGVISGPNLAREIAEHELTATVVASEDDELCARVQAALHGRTFRVYASRDRFGVELGGALKNVYAIMAGLAAAMDMGENTRSMLITRALAEMTRFAVKLGANPMTFLGLAGVGDLIVTCSSPKSRNYQVGHALGEGLSLEEAVSRMGETAEGVNTLKVLKEKSDEMQVYMPLVAGLHAILFEGRTLAQVIQLLMRGEPKTDVDFIPTTGF.

The NADPH site is built by serine 14, phenylalanine 15, arginine 35, and lysine 108. Sn-glycerol 3-phosphate-binding residues include lysine 108 and glycine 136. Alanine 140 contributes to the NADPH binding site. Residues lysine 191, aspartate 244, serine 254, arginine 255, and asparagine 256 each contribute to the sn-glycerol 3-phosphate site. The Proton acceptor role is filled by lysine 191. Arginine 255 contributes to the NADPH binding site. Position 281 (glutamate 281) interacts with NADPH.

This sequence belongs to the NAD-dependent glycerol-3-phosphate dehydrogenase family.

It localises to the cytoplasm. The enzyme catalyses sn-glycerol 3-phosphate + NAD(+) = dihydroxyacetone phosphate + NADH + H(+). It catalyses the reaction sn-glycerol 3-phosphate + NADP(+) = dihydroxyacetone phosphate + NADPH + H(+). Its pathway is membrane lipid metabolism; glycerophospholipid metabolism. Functionally, catalyzes the reduction of the glycolytic intermediate dihydroxyacetone phosphate (DHAP) to sn-glycerol 3-phosphate (G3P), the key precursor for phospholipid synthesis. This Pseudomonas aeruginosa (strain ATCC 15692 / DSM 22644 / CIP 104116 / JCM 14847 / LMG 12228 / 1C / PRS 101 / PAO1) protein is Glycerol-3-phosphate dehydrogenase [NAD(P)+].